We begin with the raw amino-acid sequence, 568 residues long: Vacuolar protein 8 (568 aa).

Gly-2 is lipidated: N-myristoyl glycine. Residues Cys-4, Cys-5, and Cys-7 are each lipidated (S-palmitoyl cysteine). 9 ARM repeats span residues 37–74 (DKDNYDFYSGGPLKALTTLVYSDNLNLQRSAALAFAEI), 75–114 (TEKYVRPVDREVLEPILILLQSHDPQIQIAACAALGNLAV), 116–155 (NENKILIVEMGGLEPLIEQMKSNNVEVQCNAVGCITNLAT), 157–196 (DDNKAKIAHSGALVPLTKLAKSKNIRVQRNATGALLNMTH), 198–237 (GENRKELVDAGAVPVLVSLLSSSDADVQYYCTTALSNIAV), 241–280 (NRRKLSQTEPRLVSKLVVLTDSPSARVKCQATLALRNLAS), 282–321 (TGYQLEIVRAGGLSHLVKLIQCNSMPLVLASVACIRNISI), 323–363 (PLNE…NLAA), and 407–446 (DNSKLELLDANILEALIPMTFSTNQEVAGNAAAALANLCS).

It belongs to the beta-catenin family.

Its subcellular location is the vacuole membrane. Functions in both vacuole inheritance and protein targeting from the cytoplasm to vacuole. This is Vacuolar protein 8 (VAC8) from Eremothecium gossypii (strain ATCC 10895 / CBS 109.51 / FGSC 9923 / NRRL Y-1056) (Yeast).